A 142-amino-acid chain; its full sequence is Hemoglobin subunit alpha-2 (142 aa).

Residues Val2–Arg142 enclose the Globin domain. His59 contacts O2. Residue His88 coordinates heme b.

This sequence belongs to the globin family. As to quaternary structure, heterotetramer of two alpha chains and two beta chains. Red blood cells.

Involved in oxygen transport from the lung to the various peripheral tissues. Functionally, hemopressin acts as an antagonist peptide of the cannabinoid receptor CNR1. Hemopressin-binding efficiently blocks cannabinoid receptor CNR1 and subsequent signaling. The sequence is that of Hemoglobin subunit alpha-2 (HBA2) from Hylobates lar (Lar gibbon).